A 183-amino-acid chain; its full sequence is Deoxyuridine 5'-triphosphate nucleotidohydrolase (183 aa).

Substrate contacts are provided by residues 67 to 69, N80, 84 to 86, and K94; these read RSG and TID. The segment at 138-183 is disordered; it reads RAEGGFGSTGGHAGLDPASGTSGQVAEGGPTGGNRYASVVSDREGQ. Gly residues predominate over residues 141–150; sequence GGFGSTGGHA.

The protein belongs to the dUTPase family. Requires Mg(2+) as cofactor.

It catalyses the reaction dUTP + H2O = dUMP + diphosphate + H(+). The protein operates within pyrimidine metabolism; dUMP biosynthesis; dUMP from dCTP (dUTP route): step 2/2. Its function is as follows. This enzyme is involved in nucleotide metabolism: it produces dUMP, the immediate precursor of thymidine nucleotides and it decreases the intracellular concentration of dUTP so that uracil cannot be incorporated into DNA. This Streptomyces coelicolor (strain ATCC BAA-471 / A3(2) / M145) protein is Deoxyuridine 5'-triphosphate nucleotidohydrolase.